Reading from the N-terminus, the 116-residue chain is Peptidyl-tRNA hydrolase (116 aa).

It belongs to the PTH2 family.

It is found in the cytoplasm. It carries out the reaction an N-acyl-L-alpha-aminoacyl-tRNA + H2O = an N-acyl-L-amino acid + a tRNA + H(+). The natural substrate for this enzyme may be peptidyl-tRNAs which drop off the ribosome during protein synthesis. This chain is Peptidyl-tRNA hydrolase, found in Methanococcus maripaludis (strain C7 / ATCC BAA-1331).